Consider the following 118-residue polypeptide: Large ribosomal subunit protein bL20 (118 aa).

It belongs to the bacterial ribosomal protein bL20 family.

Binds directly to 23S ribosomal RNA and is necessary for the in vitro assembly process of the 50S ribosomal subunit. It is not involved in the protein synthesizing functions of that subunit. The chain is Large ribosomal subunit protein bL20 from Lachnoclostridium phytofermentans (strain ATCC 700394 / DSM 18823 / ISDg) (Clostridium phytofermentans).